The chain runs to 366 residues: Cobalt-precorrin-5B C(1)-methyltransferase (366 aa).

It belongs to the CbiD family.

The enzyme catalyses Co-precorrin-5B + S-adenosyl-L-methionine = Co-precorrin-6A + S-adenosyl-L-homocysteine. The protein operates within cofactor biosynthesis; adenosylcobalamin biosynthesis; cob(II)yrinate a,c-diamide from sirohydrochlorin (anaerobic route): step 6/10. Catalyzes the methylation of C-1 in cobalt-precorrin-5B to form cobalt-precorrin-6A. This Pseudomonas aeruginosa (strain UCBPP-PA14) protein is Cobalt-precorrin-5B C(1)-methyltransferase.